Here is a 233-residue protein sequence, read N- to C-terminus: MNSANSALVLFSGGQDSTTCLAWALTHYARVETIGFDYGQRHAIELAVRPFLLEKMRLISPEWDGRLGADHMIDLSLIAKISNTALTSNVEIAMLENGLPNTFVPGRNLLFMTVAATVAYRRGLDVLVGGMCETDFSGYPDCRDDTMKALQVTLNLGMATKLKVETPLMWIDKAATWKMAQDLGGTPLLNLVRTGTHTCYLGERGELHDWGYGCGNCPACKLRARGYADFIAG.

11 to 21 (FSGGQDSTTCL) contributes to the ATP binding site. Zn(2+)-binding residues include Cys199, Cys214, Cys217, and Cys220.

This sequence belongs to the QueC family. Zn(2+) is required as a cofactor.

It catalyses the reaction 7-carboxy-7-deazaguanine + NH4(+) + ATP = 7-cyano-7-deazaguanine + ADP + phosphate + H2O + H(+). It participates in purine metabolism; 7-cyano-7-deazaguanine biosynthesis. In terms of biological role, catalyzes the ATP-dependent conversion of 7-carboxy-7-deazaguanine (CDG) to 7-cyano-7-deazaguanine (preQ(0)). The protein is 7-cyano-7-deazaguanine synthase of Herminiimonas arsenicoxydans.